Reading from the N-terminus, the 134-residue chain is Ion transport peptide-like (134 aa).

3 cysteine pairs are disulfide-bonded: Cys62/Cys98, Cys78/Cys94, and Cys81/Cys107.

It belongs to the arthropod CHH/MIH/GIH/VIH hormone family.

It is found in the secreted. This chain is Ion transport peptide-like, found in Schistocerca gregaria (Desert locust).